The sequence spans 331 residues: Isopenicillin N synthase (331 aa).

The isopenicillin N site is built by arginine 87, tyrosine 91, serine 183, and tyrosine 189. 6 residues coordinate N-[(5S)-5-amino-5-carboxypentanoyl]-L-cysteinyl-D-valine: arginine 87, tyrosine 91, serine 183, tyrosine 189, histidine 214, and aspartate 216. The Fe2OG dioxygenase domain occupies 181–288 (LSSVVLIRYP…RQSLPFFVNL (108 aa)). Residues histidine 214, aspartate 216, and histidine 270 each coordinate Fe(2+). Position 279 (arginine 279) interacts with 2-oxoglutarate. Serine 281 contacts isopenicillin N. Serine 281 is an N-[(5S)-5-amino-5-carboxypentanoyl]-L-cysteinyl-D-valine binding site.

Belongs to the iron/ascorbate-dependent oxidoreductase family. Requires Fe(2+) as cofactor.

The protein localises to the cytoplasm. It localises to the cytosol. The enzyme catalyses N-[(5S)-5-amino-5-carboxypentanoyl]-L-cysteinyl-D-valine + O2 = isopenicillin N + 2 H2O. It participates in antibiotic biosynthesis; penicillin G biosynthesis; penicillin G from L-alpha-aminoadipate and L-cysteine and L-valine: step 2/3. Its function is as follows. Isopenicillin N synthase; part of the gene cluster that mediates the biosynthesis of penicillin, the world's most important antibiotic. The first step of the pathway is performed by the trimodular NRPS acvA that produces the tripeptide N-[(5S)-5-amino-5-carboxypentanoyl]-L-cysteinyl-D-valine (LLD-ACV or ACV) via condensation of the 3 residues L-2-aminoadipate, L-cysteine and L-valine. The precursor amino acids for penicillin biosynthesis are withdrawn from the vacuolar amino acid pool by the MFS-type transporter penV. Each of the constituent amino acids of the tripeptide acv are activated as aminoacyl-adenylates with peptide bonds formed through the participation of amino acid thioester intermediates. The tripeptide ACV is then cyclized to form isopenicillin N (IPN) by the isopenicillin N synthase ipnA that forms the beta-lactam nucleus. Finally, the alpha-aminoadipyl side chain is exchanged for phenylacetic acid by the isopenicillin N acyltransferase aatA to yield penicillin. This step occurs in the peroxisomal matrix and the penM and paaT transporters are involved in the isopenicillin N and phenylacetic acid import into the peroxisome, respectively. This is Isopenicillin N synthase from Penicillium rubens (strain ATCC 28089 / DSM 1075 / NRRL 1951 / Wisconsin 54-1255) (Penicillium chrysogenum).